We begin with the raw amino-acid sequence, 607 residues long: Pyruvate decarboxylase 1 (607 aa).

Substrate contacts are provided by D69 and H156. The tract at residues 434–516 (DSWFNCQKLK…FLINNGGYTI (83 aa)) is thiamine pyrophosphate binding. 3 residues coordinate Mg(2+): D484, N511, and G513. Residue E517 coordinates substrate.

This sequence belongs to the TPP enzyme family. Homotetramer. A metal cation serves as cofactor. It depends on thiamine diphosphate as a cofactor. In terms of tissue distribution, highly expressed in seeds, and at lower levels in roots and siliques.

It carries out the reaction a 2-oxocarboxylate + H(+) = an aldehyde + CO2. Its function is as follows. May play a role in ethanolic fermentation during anoxia. This is Pyruvate decarboxylase 1 (PDC1) from Arabidopsis thaliana (Mouse-ear cress).